We begin with the raw amino-acid sequence, 248 residues long: Exosome complex component Rrp41 (248 aa).

It belongs to the RNase PH family. Rrp41 subfamily. In terms of assembly, component of the archaeal exosome complex. Forms a hexameric ring-like arrangement composed of 3 Rrp41-Rrp42 heterodimers. The hexameric ring associates with a trimer of Rrp4 and/or Csl4 subunits.

Its subcellular location is the cytoplasm. Functionally, catalytic component of the exosome, which is a complex involved in RNA degradation. Has 3'-&gt;5' exoribonuclease activity. Can also synthesize heteromeric RNA-tails. Binds RNA. This is Exosome complex component Rrp41 from Saccharolobus solfataricus (strain ATCC 35092 / DSM 1617 / JCM 11322 / P2) (Sulfolobus solfataricus).